A 437-amino-acid chain; its full sequence is Ribosomal protein uS12 methylthiotransferase RimO (437 aa).

Residues 5–116 (PTIAISHLGC…IVEIVERVET (112 aa)) form the MTTase N-terminal domain. [4Fe-4S] cluster contacts are provided by Cys-14, Cys-50, Cys-79, Cys-154, Cys-158, and Cys-161. Residues 140–369 (TTSEGVAYLR…MLTQQPISER (230 aa)) enclose the Radical SAM core domain. The TRAM domain maps to 372 to 437 (QAYIGQTVDV…DTYDLYGEIV (66 aa)).

It belongs to the methylthiotransferase family. RimO subfamily. [4Fe-4S] cluster is required as a cofactor.

The protein localises to the cytoplasm. It catalyses the reaction L-aspartate(89)-[ribosomal protein uS12]-hydrogen + (sulfur carrier)-SH + AH2 + 2 S-adenosyl-L-methionine = 3-methylsulfanyl-L-aspartate(89)-[ribosomal protein uS12]-hydrogen + (sulfur carrier)-H + 5'-deoxyadenosine + L-methionine + A + S-adenosyl-L-homocysteine + 2 H(+). Catalyzes the methylthiolation of an aspartic acid residue of ribosomal protein uS12. This Microcystis aeruginosa (strain NIES-843 / IAM M-2473) protein is Ribosomal protein uS12 methylthiotransferase RimO.